A 111-amino-acid chain; its full sequence is Probable 4-amino-4-deoxy-L-arabinose-phosphoundecaprenol flippase subunit ArnE (111 aa).

Transmembrane regions (helical) follow at residues 37-57 (LIWLGLSVIFLAGGMLLWLKL), 65-85 (QAYPFLSINLILVTLSGHFFF), and 91-111 (LQHWLGIGIMMVGILLLGQGI).

It belongs to the ArnE family. As to quaternary structure, heterodimer of ArnE and ArnF.

Its subcellular location is the cell inner membrane. It functions in the pathway bacterial outer membrane biogenesis; lipopolysaccharide biosynthesis. Its function is as follows. Translocates 4-amino-4-deoxy-L-arabinose-phosphoundecaprenol (alpha-L-Ara4N-phosphoundecaprenol) from the cytoplasmic to the periplasmic side of the inner membrane. The sequence is that of Probable 4-amino-4-deoxy-L-arabinose-phosphoundecaprenol flippase subunit ArnE from Hamiltonella defensa subsp. Acyrthosiphon pisum (strain 5AT).